Reading from the N-terminus, the 919-residue chain is Exostosin-like 3 (919 aa).

The Cytoplasmic portion of the chain corresponds to 1 to 30 (MTGYTMLRNGGAGNGGQTCMLRWSNRIRLT). A required for interaction with REG3A region spans residues 1-140 (MTGYTMLRNG…LKNVISQTEH (140 aa)). The helical; Signal-anchor for type II membrane protein transmembrane segment at 31 to 51 (WLSFTLFVILVFFPLIAHYYL) threads the bilayer. Residues 52-919 (TTLDEADEAG…HDKTKCFKFI (868 aa)) are Lumenal-facing. 2 disulfide bridges follow: cysteine 177–cysteine 182 and cysteine 188–cysteine 236. Asparagine 290 is a glycosylation site (N-linked (GlcNAc...) asparagine). A Phosphoserine modification is found at serine 362. Cysteines 400 and 415 form a disulfide. An N-linked (GlcNAc...) asparagine glycan is attached at asparagine 592. Positions 668, 672, 697, 723, 728, 744, 745, and 746 each coordinate UDP-N-acetyl-alpha-D-glucosamine. Aspartate 746 lines the Mn(2+) pocket. A glycan (N-linked (GlcNAc...) asparagine) is linked at asparagine 790. Cysteine 831 and cysteine 879 are joined by a disulfide. UDP-N-acetyl-alpha-D-glucosamine-binding residues include glutamate 832, aspartate 833, and arginine 876. Residue aspartate 833 is part of the active site.

Belongs to the glycosyltransferase 47 family. In terms of assembly, homodimer; disulfide-linked. Interacts with REG3A. The cofactor is Mn(2+). In terms of tissue distribution, ubiquitous. Expressed in keratinocytes. Expressed in pancreas.

Its subcellular location is the endoplasmic reticulum membrane. The protein resides in the golgi apparatus. It is found in the cell membrane. It localises to the nucleus. The enzyme catalyses 3-O-(beta-D-GlcA-(1-&gt;3)-beta-D-Gal-(1-&gt;3)-beta-D-Gal-(1-&gt;4)-beta-D-Xyl)-L-seryl-[protein] + UDP-N-acetyl-alpha-D-glucosamine = 3-O-(alpha-D-GlcNAc-(1-&gt;4)-beta-D-GlcA-(1-&gt;3)-beta-D-Gal-(1-&gt;3)-beta-D-Gal-(1-&gt;4)-beta-D-Xyl)-L-seryl-[protein] + UDP + H(+). It participates in glycan metabolism; heparan sulfate biosynthesis. Functionally, glycosyltransferase which regulates the biosynthesis of heparan sulfate (HS). Initiates HS synthesis by transferring the first N-acetyl-alpha-D-glucosamine (alpha-GlcNAc) residue (GlcNAcT-I activity) to the tetrasaccharide linker (GlcA-Gal-Gal-Xyl-)Ser core linker. May also transfer alpha-GlcNAc residues during HS elongation (GlcNAcT-II activity). Lacks glucuronyl transferase II (GlcAT-II) activity. Important for both skeletal development and hematopoiesis, through the formation of HS proteoglycans (HSPGs). Through the synthesis of HS, regulates postnatal pancreatic islet maturation and insulin secretion. Receptor for REG3A, REG3B and REG3G, induces the activation of downstream signaling pathways such as PI3K-AKT or RAS-RAF-MEK-ERK signaling pathway. Required for the function of REG3A in regulating keratinocyte proliferation and differentiation. Required for the inhibition of skin inflammation mediated by REG3A through the activation of PI3K-AKT-STAT3 pathway. Required for the function of REG3A and REG3G in glucose tolerance in pancreas. Expressed in microglia, is activated by nociceptor-derived REG3G in response to endotoxins, leading to the inhibition of kynurenine pathway to prevent endotoxic death. The protein is Exostosin-like 3 of Homo sapiens (Human).